The sequence spans 100 residues: NADH-quinone oxidoreductase subunit K (100 aa).

Helical transmembrane passes span Ile-4–Val-24, Leu-29–Phe-49, and Phe-63–Val-83.

It belongs to the complex I subunit 4L family. NDH-1 is composed of 14 different subunits. Subunits NuoA, H, J, K, L, M, N constitute the membrane sector of the complex.

The protein resides in the cell inner membrane. The catalysed reaction is a quinone + NADH + 5 H(+)(in) = a quinol + NAD(+) + 4 H(+)(out). NDH-1 shuttles electrons from NADH, via FMN and iron-sulfur (Fe-S) centers, to quinones in the respiratory chain. The immediate electron acceptor for the enzyme in this species is believed to be ubiquinone. Couples the redox reaction to proton translocation (for every two electrons transferred, four hydrogen ions are translocated across the cytoplasmic membrane), and thus conserves the redox energy in a proton gradient. This chain is NADH-quinone oxidoreductase subunit K, found in Myxococcus xanthus (strain DK1622).